Consider the following 185-residue polypeptide: MQTIRKSLGLVLIMFVLCGFIFPLTVTALGQVLFPEQANGSLVKQDGKVIGSKLIGQQWTEPKYFHGRISAVNYNMNANEVKESGGPASGGSNYGNSNPELKKRVQETIKQEGQKLSSDAVTTSGSGLDPDITVDNAKQQVKCIAKERNIDASKINHLIDENKQASPMADDYVNVLKLNITLDKL.

A helical transmembrane segment spans residues 8 to 28 (LGLVLIMFVLCGFIFPLTVTA). The interval 113–132 (GQKLSSDAVTTSGSGLDPDI) is disordered. Positions 114 to 126 (QKLSSDAVTTSGS) are enriched in polar residues.

This sequence belongs to the KdpC family. In terms of assembly, the system is composed of three essential subunits: KdpA, KdpB and KdpC.

It is found in the cell membrane. Functionally, part of the high-affinity ATP-driven potassium transport (or Kdp) system, which catalyzes the hydrolysis of ATP coupled with the electrogenic transport of potassium into the cytoplasm. This subunit acts as a catalytic chaperone that increases the ATP-binding affinity of the ATP-hydrolyzing subunit KdpB by the formation of a transient KdpB/KdpC/ATP ternary complex. The chain is Potassium-transporting ATPase KdpC subunit from Staphylococcus haemolyticus (strain JCSC1435).